The following is a 359-amino-acid chain: Probable mannitol dehydrogenase (359 aa).

7 residues coordinate Zn(2+): C48, H70, C101, C104, C107, C115, and C164.

It belongs to the zinc-containing alcohol dehydrogenase family. Requires Zn(2+) as cofactor.

The catalysed reaction is D-mannitol + NAD(+) = D-mannose + NADH + H(+). Its function is as follows. Oxidizes mannitol to mannose. Provides the initial step by which translocated mannitol is committed to central metabolism and, by regulating mannitol pool size, is important in regulating salt tolerance at the cellular level. This Fragaria ananassa (Strawberry) protein is Probable mannitol dehydrogenase (CAD).